We begin with the raw amino-acid sequence, 403 residues long: Phosphopentomutase (403 aa).

Mn(2+)-binding residues include Asp-13, Asp-298, His-303, Asp-339, His-340, and His-351.

The protein belongs to the phosphopentomutase family. Mn(2+) serves as cofactor.

The protein localises to the cytoplasm. It catalyses the reaction 2-deoxy-alpha-D-ribose 1-phosphate = 2-deoxy-D-ribose 5-phosphate. The enzyme catalyses alpha-D-ribose 1-phosphate = D-ribose 5-phosphate. It participates in carbohydrate degradation; 2-deoxy-D-ribose 1-phosphate degradation; D-glyceraldehyde 3-phosphate and acetaldehyde from 2-deoxy-alpha-D-ribose 1-phosphate: step 1/2. Isomerase that catalyzes the conversion of deoxy-ribose 1-phosphate (dRib-1-P) and ribose 1-phosphate (Rib-1-P) to deoxy-ribose 5-phosphate (dRib-5-P) and ribose 5-phosphate (Rib-5-P), respectively. The polypeptide is Phosphopentomutase (Streptococcus pyogenes serotype M4 (strain MGAS10750)).